Reading from the N-terminus, the 104-residue chain is ATP-dependent Clp protease adapter protein ClpS (104 aa).

This sequence belongs to the ClpS family. Binds to the N-terminal domain of the chaperone ClpA.

Functionally, involved in the modulation of the specificity of the ClpAP-mediated ATP-dependent protein degradation. The sequence is that of ATP-dependent Clp protease adapter protein ClpS from Paraburkholderia xenovorans (strain LB400).